The primary structure comprises 500 residues: Maturase K (500 aa).

The protein belongs to the intron maturase 2 family. MatK subfamily.

Its subcellular location is the plastid. It localises to the chloroplast. In terms of biological role, usually encoded in the trnK tRNA gene intron. Probably assists in splicing its own and other chloroplast group II introns. In Argentina anserina (Silverweed cinquefoil), this protein is Maturase K.